The chain runs to 158 residues: Large ribosomal subunit protein bL17 (158 aa).

Positions 119 to 158 (APAAAPEAEEKGEKKAAKAPKAEKAPKAEKKPAKKAAKAE) are disordered. Positions 126-158 (AEEKGEKKAAKAPKAEKAPKAEKKPAKKAAKAE) are enriched in basic and acidic residues.

It belongs to the bacterial ribosomal protein bL17 family. In terms of assembly, part of the 50S ribosomal subunit. Contacts protein L32.

This chain is Large ribosomal subunit protein bL17, found in Anaeromyxobacter sp. (strain K).